Reading from the N-terminus, the 451-residue chain is COBRA-like protein 6 (451 aa).

The first 21 residues, 1–21, serve as a signal peptide directing secretion; it reads MAVLGSLLLLILAATLSVAVA. N-linked (GlcNAc...) asparagine glycosylation is found at asparagine 30, asparagine 155, asparagine 163, asparagine 202, asparagine 227, asparagine 323, asparagine 338, and asparagine 357. The GPI-anchor amidated asparagine moiety is linked to residue asparagine 426. Residues 427–451 constitute a propeptide, removed in mature form; that stretch reads AAPPAAASLVGSAVAMAALVFFLMA.

It belongs to the COBRA family.

It is found in the cell membrane. Its function is as follows. Involved in determining the orientation of cell expansion, probably by playing an important role in cellulose deposition. May act by recruiting cellulose synthesizing complexes to discrete positions on the cell surface. This is COBRA-like protein 6 (BC1L7) from Oryza sativa subsp. japonica (Rice).